A 195-amino-acid chain; its full sequence is Thymidine kinase (195 aa).

Residues 15–22 (GSMFSGKT) and 91–94 (DEAN) contribute to the ATP site. The Proton acceptor role is filled by Glu92. Residues Cys148, Cys151, Cys186, and Cys189 each contribute to the Zn(2+) site.

The protein belongs to the thymidine kinase family. As to quaternary structure, homotetramer.

It localises to the cytoplasm. It carries out the reaction thymidine + ATP = dTMP + ADP + H(+). In Halobacterium salinarum (strain ATCC 29341 / DSM 671 / R1), this protein is Thymidine kinase.